The following is a 183-amino-acid chain: Copper metallothionein 2 (183 aa).

The segment at 1-35 is cys-rich copper-binding 1; it reads MAFNPNPEKTTSCCSTSKAQDKCTCPKGKCECETC. Residues 36–45 form a spacer B1 region; the sequence is PKSTKTPGSG. The interval 46-79 is cys-rich copper-binding 2; sequence PCNCGVKEKVSTCGCNGSGAACTCPPGQCACDSC. The tract at residues 80 to 88 is spacer B2; the sequence is PRKAKSVST. Positions 89 to 110 are cys-rich copper-binding 3; that stretch reads CGCGGSAAACSCPPGKCACDSC. Residues 111-120 form a spacer B3 region; it reads PKQAQEKVSS. Positions 121–142 are cys-rich copper-binding 4; sequence CACNGSGGACTCPPGKCSCSGC. The spacer B4 stretch occupies residues 143–156; that stretch reads PAQAKENPADQPTT. The cys-rich copper-binding 5 stretch occupies residues 157–183; sequence CGCQGVGVACTCPPGQCACDGCPAKAK.

The protein belongs to the metallothionein superfamily.

The protein localises to the cytoplasm. It localises to the cell cortex. Its function is as follows. Copper metallothionein that protects the cell against copper toxicity by tightly chelating copper ions. Required for antioxidant-mediated growth rescue in the presence of fluconazole. Acts as a critical factors for lung colonization and virulence. This Cryptococcus neoformans var. grubii serotype A (strain H99 / ATCC 208821 / CBS 10515 / FGSC 9487) (Filobasidiella neoformans var. grubii) protein is Copper metallothionein 2.